Consider the following 471-residue polypeptide: Ribulose bisphosphate carboxylase large chain (471 aa).

Substrate-binding residues include Asn-115 and Thr-165. Catalysis depends on Lys-167, which acts as the Proton acceptor. Position 169 (Lys-169) interacts with substrate. Residues Lys-193, Asp-195, and Glu-196 each contribute to the Mg(2+) site. Lys-193 carries the N6-carboxylysine modification. The active-site Proton acceptor is His-286. Substrate contacts are provided by Arg-287, His-319, and Ser-371.

Belongs to the RuBisCO large chain family. Type I subfamily. As to quaternary structure, heterohexadecamer of 8 large chains and 8 small chains. Mg(2+) serves as cofactor.

The protein resides in the carboxysome. The catalysed reaction is 2 (2R)-3-phosphoglycerate + 2 H(+) = D-ribulose 1,5-bisphosphate + CO2 + H2O. The enzyme catalyses D-ribulose 1,5-bisphosphate + O2 = 2-phosphoglycolate + (2R)-3-phosphoglycerate + 2 H(+). RuBisCO catalyzes two reactions: the carboxylation of D-ribulose 1,5-bisphosphate, the primary event in carbon dioxide fixation, as well as the oxidative fragmentation of the pentose substrate in the photorespiration process. Both reactions occur simultaneously and in competition at the same active site. This is Ribulose bisphosphate carboxylase large chain from Prochlorococcus marinus (strain MIT 9301).